The sequence spans 1009 residues: Glutamate receptor ionotropic, delta-1 (1009 aa).

A signal peptide spans 1–20 (MEALTLWLLPWICQCVTVRA). An interaction with CBLN1 region spans residues 21–436 (DSIIHIGAIF…ERPMGSRLQG (416 aa)). At 21 to 562 (DSIIHIGAIF…SIFSLFAPFD (542 aa)) the chain is on the extracellular side. 3 disulfides stabilise this stretch: C80/C351, C96/C128, and C294/C306. N-linked (GlcNAc...) asparagine glycosylation is found at N131 and N200. N-linked (GlcNAc...) asparagine glycosylation is found at N422 and N498. Residues E527, V530, and D531 each coordinate Ca(2+). Residues 563–583 (FAVWACIAAAIPVVGVLIFVL) traverse the membrane as a helical segment. Topologically, residues 584–637 (NRIQAVRSQSATQPRPSASATLHSAIWIVYGAFVQQGGESSVNSVAMRIVMGSW) are cytoplasmic. Residues 638 to 658 (WLFTLIVCSSYTANLAAFLTV) traverse the membrane as a helical segment. The Extracellular segment spans residues 659–830 (SRMDNPIRTF…TEGKSLKLHS (172 aa)). The Ca(2+) site is built by D753, D755, and S757. A helical membrane pass occupies residues 831-851 (FAGVFCILAIGLLLACLVAAL). At 852–1009 (ELWWNSNRCH…ALDTSHGTSI (158 aa)) the chain is on the cytoplasmic side. A compositionally biased stretch (polar residues) spans 931–942 (LPEQSSHGTSRT). The disordered stretch occupies residues 931–960 (LPEQSSHGTSRTLSSGPSSNLPLPLSSSAT). Low complexity predominate over residues 943–958 (LSSGPSSNLPLPLSSS).

The protein belongs to the glutamate-gated ion channel (TC 1.A.10.1) family. GRID1 subfamily. As to quaternary structure, homodimer. Interacts (via extracellular N-terminal domain) with CBLN1 (via C1q domain), and more weakly with CBLN2; the interactions mediate the trans-synaptic adhesion complexes also with neurexins and are required for ligand-gated cation channel activity. Equally in forebrain and cerebellum.

The protein localises to the postsynaptic cell membrane. It carries out the reaction Ca(2+)(in) = Ca(2+)(out). The enzyme catalyses Na(+)(in) = Na(+)(out). In terms of biological role, member of the ionotropic glutamate receptor family, which plays a crucial role in synaptic organization and signal transduction in the central nervous system. Although it shares structural features with ionotropic glutamate receptors, does not bind glutamate as a primary ligand. Instead, forms trans-synaptic adhesion complexes with presynaptic neurexins and cerebellins, regulating NMDA and AMPA receptor activity and influencing synaptic plasticity through signal transduction. In the presence of NRX1B-CBLN1, forms cation-selective channels that are proposed to be gated by glycine and D-serine. However, recent research disputes this ligand-gated cation channel activity. Cation-selective ion channel can be triggered by GRM1 in dopaminergic neurons. Also acts as a receptor for GABA, modulating inhibitory synaptic plasticity through non-ionotropic mechanisms. This chain is Glutamate receptor ionotropic, delta-1 (Grid1), found in Mus musculus (Mouse).